The chain runs to 213 residues: Cytochrome b6 (213 aa).

A helical membrane pass occupies residues 30-50; sequence IFFCLGGLTLLCFIVQCLTGI. Cys-33 contributes to the heme c binding site. His-84 and His-98 together coordinate heme b. 3 helical membrane passes run 88–108, 114–134, and 184–204; these read CQLM…TGAF, LNWV…FTGY, and LHVM…FIMI. Residues His-185 and His-200 each coordinate heme b.

The protein belongs to the cytochrome b family. PetB subfamily. The subunits of the cytochrome bc complex are a Rieske Fe-S protein (PetC), cytochrome b6 (PetB), subunit IV (PetD), and a diheme cytochrome c (PetX). Heme b serves as cofactor. The cofactor is heme c.

It localises to the cell membrane. In terms of biological role, component of the cytochrome bc complex which donates electrons to the photosynthetic reaction center. The chain is Cytochrome b6 from Heliomicrobium gestii (Heliobacterium gestii).